Reading from the N-terminus, the 357-residue chain is Fructose-bisphosphate aldolase, cytoplasmic isozyme (357 aa).

Residues Arg-53 and Lys-142 each coordinate substrate. Glu-183 serves as the catalytic Proton acceptor. Lys-225 acts as the Schiff-base intermediate with dihydroxyacetone-P in catalysis.

This sequence belongs to the class I fructose-bisphosphate aldolase family.

The protein localises to the cytoplasm. The catalysed reaction is beta-D-fructose 1,6-bisphosphate = D-glyceraldehyde 3-phosphate + dihydroxyacetone phosphate. Its pathway is carbohydrate degradation; glycolysis; D-glyceraldehyde 3-phosphate and glycerone phosphate from D-glucose: step 4/4. This is Fructose-bisphosphate aldolase, cytoplasmic isozyme from Spinacia oleracea (Spinach).